Consider the following 550-residue polypeptide: ATP synthase subunit alpha (550 aa).

An ATP-binding site is contributed by 172 to 179 (GDRKTGKT). The disordered stretch occupies residues 514–550 (EDEQRVNEPPAKPLAGEENRETVTRFRDGTTDRPAES). The segment covering 528–550 (AGEENRETVTRFRDGTTDRPAES) has biased composition (basic and acidic residues).

The protein belongs to the ATPase alpha/beta chains family. In terms of assembly, F-type ATPases have 2 components, CF(1) - the catalytic core - and CF(0) - the membrane proton channel. CF(1) has five subunits: alpha(3), beta(3), gamma(1), delta(1), epsilon(1). CF(0) has three main subunits: a(1), b(2) and c(9-12). The alpha and beta chains form an alternating ring which encloses part of the gamma chain. CF(1) is attached to CF(0) by a central stalk formed by the gamma and epsilon chains, while a peripheral stalk is formed by the delta and b chains.

The protein resides in the cell membrane. The catalysed reaction is ATP + H2O + 4 H(+)(in) = ADP + phosphate + 5 H(+)(out). In terms of biological role, produces ATP from ADP in the presence of a proton gradient across the membrane. The alpha chain is a regulatory subunit. The chain is ATP synthase subunit alpha from Salinispora arenicola (strain CNS-205).